Here is a 69-residue protein sequence, read N- to C-terminus: DNA-directed RNA polymerase subunit omega (69 aa).

This sequence belongs to the RNA polymerase subunit omega family. As to quaternary structure, the RNAP catalytic core consists of 2 alpha, 1 beta, 1 beta' and 1 omega subunit. When a sigma factor is associated with the core the holoenzyme is formed, which can initiate transcription.

It catalyses the reaction RNA(n) + a ribonucleoside 5'-triphosphate = RNA(n+1) + diphosphate. Promotes RNA polymerase assembly. Latches the N- and C-terminal regions of the beta' subunit thereby facilitating its interaction with the beta and alpha subunits. The chain is DNA-directed RNA polymerase subunit omega from Geotalea uraniireducens (strain Rf4) (Geobacter uraniireducens).